The sequence spans 160 residues: Phosphopantetheine adenylyltransferase (160 aa).

Substrate is bound at residue Thr-10. Residues 10 to 11 (TF) and His-18 contribute to the ATP site. Substrate-binding residues include Lys-42, Leu-74, and Arg-88. Residues 89–91 (GLR), Glu-99, and 124–130 (NSFISST) contribute to the ATP site.

It belongs to the bacterial CoaD family. Homohexamer. Mg(2+) is required as a cofactor.

The protein localises to the cytoplasm. The catalysed reaction is (R)-4'-phosphopantetheine + ATP + H(+) = 3'-dephospho-CoA + diphosphate. It functions in the pathway cofactor biosynthesis; coenzyme A biosynthesis; CoA from (R)-pantothenate: step 4/5. Functionally, reversibly transfers an adenylyl group from ATP to 4'-phosphopantetheine, yielding dephospho-CoA (dPCoA) and pyrophosphate. This chain is Phosphopantetheine adenylyltransferase, found in Aeromonas hydrophila subsp. hydrophila (strain ATCC 7966 / DSM 30187 / BCRC 13018 / CCUG 14551 / JCM 1027 / KCTC 2358 / NCIMB 9240 / NCTC 8049).